The sequence spans 309 residues: Probable 2,4-dienoyl-CoA reductase decr-1.2 [(3E)-enoyl-CoA-producing] (309 aa).

NADP(+) contacts are provided by residues 28–60, 32–37, arginine 57, and aspartate 83; these read VLVT…RRME and GGGTGI. Arginine 57 provides a ligand contact to substrate. Phenylalanine 116 and serine 124 together coordinate substrate. Tyrosine 166 (proton acceptor) is an active-site residue. NADP(+) is bound by residues lysine 181 and 207 to 210; that span reads PGPI. Residue arginine 218 participates in substrate binding.

The protein belongs to the short-chain dehydrogenases/reductases (SDR) family. 2,4-dienoyl-CoA reductase subfamily.

The catalysed reaction is a (2E,4E)-dienoyl-CoA + NADPH + H(+) = a 4,5-saturated-(3E)-enoyl-CoA + NADP(+). It catalyses the reaction a (2E,4Z)-dienoyl-CoA + NADPH + H(+) = a 4,5-saturated-(3E)-enoyl-CoA + NADP(+). In terms of biological role, auxiliary enzyme of beta-oxidation. It participates in the metabolism of unsaturated fatty enoyl-CoA esters having double bonds in both even- and odd-numbered positions. Catalyzes the NADP-dependent reduction of 2,4-dienoyl-CoA to yield trans-3-enoyl-CoA. The polypeptide is Probable 2,4-dienoyl-CoA reductase decr-1.2 [(3E)-enoyl-CoA-producing] (Caenorhabditis elegans).